The following is a 494-amino-acid chain: Transcriptional regulator calD (494 aa).

The protein resides in the nucleus. Its function is as follows. Transcription co-regulator that might be involved in the regulation of the expression of the gene cluster that mediates the biosynthesis of calbistrins and related compounds such as decumbenones. Calbistrin A is a secondary metabolite with an interesting structure that was recently found to have bioactivity against leukemia cells. It consists of two polyketides linked by an ester bond: a bicyclic decalin containing polyketide and a linear 12 carbon dioic acid structure. In Penicillium decumbens, this protein is Transcriptional regulator calD.